A 79-amino-acid polypeptide reads, in one-letter code: uncharacterized protein (79 aa).

It belongs to the BolA/IbaG family.

This is an uncharacterized protein from Buchnera aphidicola subsp. Baizongia pistaciae (strain Bp).